Reading from the N-terminus, the 123-residue chain is Small ribosomal subunit protein uS13 (123 aa).

Residues 93 to 123 (RRNLPVRGQKTKTNARTRKGPKRAIGGKKKK) form a disordered region.

This sequence belongs to the universal ribosomal protein uS13 family. In terms of assembly, part of the 30S ribosomal subunit. Forms a loose heterodimer with protein S19. Forms two bridges to the 50S subunit in the 70S ribosome.

Located at the top of the head of the 30S subunit, it contacts several helices of the 16S rRNA. In the 70S ribosome it contacts the 23S rRNA (bridge B1a) and protein L5 of the 50S subunit (bridge B1b), connecting the 2 subunits; these bridges are implicated in subunit movement. Contacts the tRNAs in the A and P-sites. This is Small ribosomal subunit protein uS13 from Clostridium botulinum (strain Kyoto / Type A2).